A 291-amino-acid polypeptide reads, in one-letter code: 4-diphosphocytidyl-2-C-methyl-D-erythritol kinase (291 aa).

Residue Lys-10 is part of the active site. 94 to 104 (PVSAGLAGGSS) lines the ATP pocket. Asp-136 is a catalytic residue.

Belongs to the GHMP kinase family. IspE subfamily.

It carries out the reaction 4-CDP-2-C-methyl-D-erythritol + ATP = 4-CDP-2-C-methyl-D-erythritol 2-phosphate + ADP + H(+). It participates in isoprenoid biosynthesis; isopentenyl diphosphate biosynthesis via DXP pathway; isopentenyl diphosphate from 1-deoxy-D-xylulose 5-phosphate: step 3/6. Its function is as follows. Catalyzes the phosphorylation of the position 2 hydroxy group of 4-diphosphocytidyl-2C-methyl-D-erythritol. The sequence is that of 4-diphosphocytidyl-2-C-methyl-D-erythritol kinase from Listeria monocytogenes serotype 4a (strain HCC23).